We begin with the raw amino-acid sequence, 224 residues long: 7-cyano-7-deazaguanine synthase (224 aa).

9-19 contributes to the ATP binding site; sequence ISGGMDSTLCA. Zn(2+) is bound by residues C190, C198, C201, and C204.

It belongs to the QueC family. Zn(2+) is required as a cofactor.

It catalyses the reaction 7-carboxy-7-deazaguanine + NH4(+) + ATP = 7-cyano-7-deazaguanine + ADP + phosphate + H2O + H(+). It participates in purine metabolism; 7-cyano-7-deazaguanine biosynthesis. In terms of biological role, catalyzes the ATP-dependent conversion of 7-carboxy-7-deazaguanine (CDG) to 7-cyano-7-deazaguanine (preQ(0)). The chain is 7-cyano-7-deazaguanine synthase from Campylobacter jejuni subsp. doylei (strain ATCC BAA-1458 / RM4099 / 269.97).